The primary structure comprises 604 residues: Choline transporter-like protein 3 (604 aa).

2 N-linked (GlcNAc...) asparagine glycosylation sites follow: Asn-90 and Asn-103. 5 helical membrane passes run 165–185 (DTIL…LFTF), 195–215 (IIIS…WWLY), 237–257 (LAFA…IFTL), 286–306 (LWTF…LLSL), and 330–350 (YLWW…LTCQ). 2 N-linked (GlcNAc...) asparagine glycosylation sites follow: Asn-454 and Asn-472. 2 consecutive transmembrane segments (helical) span residues 485–505 (FIIF…GLMA) and 514–534 (VWAI…HSFL). Residues 581 to 592 (NARSQGHKNSLP) show a composition bias toward polar residues. Residues 581 to 604 (NARSQGHKNSLPNEEGTELRPIVR) form a disordered region.

It belongs to the CTL (choline transporter-like) family. Expressed in colon, kidney and ileum.

The protein resides in the membrane. The sequence is that of Choline transporter-like protein 3 (Slc44a3) from Rattus norvegicus (Rat).